A 480-amino-acid polypeptide reads, in one-letter code: Glutamate--tRNA ligase (480 aa).

Residues 9-19 (PSPTGNLHIGT) carry the 'HIGH' region motif. A 'KMSKS' region motif is present at residues 250–254 (KLSKR). Lysine 253 provides a ligand contact to ATP.

This sequence belongs to the class-I aminoacyl-tRNA synthetase family. Glutamate--tRNA ligase type 1 subfamily. As to quaternary structure, monomer.

It localises to the cytoplasm. The enzyme catalyses tRNA(Glu) + L-glutamate + ATP = L-glutamyl-tRNA(Glu) + AMP + diphosphate. Its function is as follows. Catalyzes the attachment of glutamate to tRNA(Glu) in a two-step reaction: glutamate is first activated by ATP to form Glu-AMP and then transferred to the acceptor end of tRNA(Glu). This chain is Glutamate--tRNA ligase, found in Microcystis aeruginosa (strain NIES-843 / IAM M-2473).